Consider the following 235-residue polypeptide: High mobility group protein 1.2 (235 aa).

Over residues 1–34 the composition is skewed to polar residues; the sequence is MNSGYSANIFPSSSSPTLYQSHQLQPNPSATMYQ. Residues 1–47 are disordered; that stretch reads MNSGYSANIFPSSSSPTLYQSHQLQPNPSATMYQATPRDMGKPPVRG. DNA-binding regions (HMG box) lie at residues 47 to 117 and 135 to 203; these read GKTS…AAYG and PKRA…RNYK.

This sequence belongs to the HMGB family.

It is found in the nucleus. The sequence is that of High mobility group protein 1.2 (hmg-1.2) from Caenorhabditis elegans.